Here is a 1193-residue protein sequence, read N- to C-terminus: Structural maintenance of chromosomes protein 3 homolog (1193 aa).

Gly31–Ser38 serves as a coordination point for ATP. Lys101 carries the post-translational modification N6-acetyllysine. 2 coiled-coil regions span residues Ser179 to Thr286 and Ile332 to Lys483. Residues Glu505–Tyr631 enclose the SMC hinge domain. The stretch at Thr665–Gln993 forms a coiled coil.

It belongs to the SMC family. SMC3 subfamily. In terms of assembly, component of the cohesin complex. Acetylation at Lys-101 by ESCO1 is important for genome stability and S phase sister chromatid cohesion.

Its subcellular location is the nucleus. Its function is as follows. Central component of cohesin, a complex required for chromosome cohesion during the cell cycle. The cohesin complex may form a large proteinaceous ring within which sister chromatids can be trapped. At anaphase, the complex is cleaved and dissociates from chromatin, allowing sister chromatids to segregate. Cohesion is coupled to DNA replication and is involved in DNA repair. The cohesin complex also plays an important role in spindle pole assembly during mitosis and in chromosomes movement. The protein is Structural maintenance of chromosomes protein 3 homolog of Plasmodium falciparum (isolate 3D7).